The sequence spans 175 residues: Protein FanH (175 aa).

An N-terminal signal peptide occupies residues 1–20 (MIKKVPVLLFFMASISITHA). Cysteine 39 and cysteine 77 are oxidised to a cystine.

The protein resides in the fimbrium. Functionally, involved in the biosynthesis of K99 fimbriae. The sequence is that of Protein FanH (fanH) from Escherichia coli.